A 447-amino-acid chain; its full sequence is Signal recognition particle protein (447 aa).

GTP is bound by residues glycine 108–threonine 115, aspartate 190–arginine 194, and threonine 248–aspartate 251.

This sequence belongs to the GTP-binding SRP family. SRP54 subfamily. Part of the signal recognition particle protein translocation system, which is composed of SRP and FtsY. Interacts with RNA.

The protein resides in the cytoplasm. It catalyses the reaction GTP + H2O = GDP + phosphate + H(+). In terms of biological role, involved in targeting and insertion of nascent membrane proteins into the cytoplasmic membrane. Binds to the hydrophobic signal sequence of the ribosome-nascent chain (RNC) as it emerges from the ribosomes. The SRP-RNC complex is then targeted to the cytoplasmic membrane where it interacts with the SRP receptor FtsY. The protein is Signal recognition particle protein of Mycoplasma mycoides.